We begin with the raw amino-acid sequence, 89 residues long: Envelope glycoprotein N (89 aa).

A signal peptide spans 1–24 (MAPGRGVLLLICLCLMDNVSQVVC). The Virion surface segment spans residues 25 to 56 (SQNSTTPSKFPTFYSYDCNADTYAPQLTSFST). Residues 57–77 (IWTLLNVLVMTIACVIYLIYM) form a helical membrane-spanning segment. The Intravirion segment spans residues 78-89 (CFNKFVATMTNT).

Belongs to the herpesviridae glycoprotein N family. Interacts (via N-terminus) with gM (via N-terminus). The gM-gN heterodimer forms the gCII complex.

The protein resides in the virion membrane. It is found in the host membrane. Its subcellular location is the host Golgi apparatus. It localises to the host trans-Golgi network. Its function is as follows. Envelope glycoprotein necessary for proper maturation of gM and modulation of its membrane fusion activity. Also plays a critical role in virion morphogenesis. The chain is Envelope glycoprotein N from Equine herpesvirus 2 (strain 86/87) (EHV-2).